The primary structure comprises 3388 residues: Genome polyprotein (3388 aa).

The interval 1–15 (MNDQRKKARNTPFNM) is interaction with host EXOC1. Over 1–101 (MNDQRKKARN…LNILNRRRRT (101 aa)) the chain is Cytoplasmic. Positions 37–72 (MLQGRGPLKLFMALVAFLRFLTIPPTAGILKRWGTI) are hydrophobic; homodimerization of capsid protein C. Residues 101–114 (TAGMIIMLIPTVMA) constitute a propeptide, ER anchor for the capsid protein C, removed in mature form by serine protease NS3. Residues 102–122 (AGMIIMLIPTVMAFHLTTRNG) traverse the membrane as a helical segment. Residues 123–238 (EPHMIVSRQE…GAWKHAQRIE (116 aa)) are Extracellular-facing. Asparagine 183 carries N-linked (GlcNAc...) asparagine; by host glycosylation. The helical transmembrane segment at 239–259 (TWILRHPGFTIMAAILAYTIG) threads the bilayer. Topologically, residues 260 to 265 (TTHFQR) are cytoplasmic. The helical transmembrane segment at 266 to 280 (VLIFILLTAIAPSMT) threads the bilayer. The Extracellular portion of the chain corresponds to 281–725 (MRCIGISNRD…LHQVFGAIYG (445 aa)). Intrachain disulfides connect cysteine 283-cysteine 310, cysteine 340-cysteine 401, cysteine 354-cysteine 385, and cysteine 372-cysteine 396. An N-linked (GlcNAc...) asparagine; by host glycan is attached at asparagine 347. The interval 378–391 (DRGWGNGCGLFGKG) is fusion peptide. Asparagine 433 carries an N-linked (GlcNAc...) asparagine; by host glycan. Intrachain disulfides connect cysteine 465–cysteine 565 and cysteine 582–cysteine 613. A helical membrane pass occupies residues 726–746 (AAFSGVSWTMKILIGVIITWI). Residues 747 to 752 (GMNSRS) are Cytoplasmic-facing. The helical transmembrane segment at 753 to 773 (TSLSVSLVLVGIVTLYLGVMV) threads the bilayer. Residues 774–1195 (QADSGCVVSW…MVGATMTDDI (422 aa)) are Extracellular-facing. Cystine bridges form between cysteine 779–cysteine 790, cysteine 830–cysteine 918, cysteine 954–cysteine 998, cysteine 1055–cysteine 1104, cysteine 1066–cysteine 1088, and cysteine 1087–cysteine 1091. N-linked (GlcNAc...) asparagine; by host glycans are attached at residues asparagine 905 and asparagine 982. Residue asparagine 1134 is glycosylated (N-linked (GlcNAc...) asparagine; by host). The chain crosses the membrane as a helical span at residues 1196–1220 (GMGVTYLALLAAFKVRPTFAAGLLL). The Cytoplasmic segment spans residues 1221–1226 (RKLTSK). A helical transmembrane segment spans residues 1227–1245 (ELMMTTIGIVLLSQSSIPE). Residues 1246–1269 (TILELTDALALGMMVLKMVRNMEK) are Lumenal-facing. The chain crosses the membrane as a helical span at residues 1270–1290 (YQLAVTIMAILCVPNAVILQN). Position 1291 (alanine 1291) is a topological domain, cytoplasmic. Residues 1292 to 1310 (WKVSCTILAVVSVSPLFLT) traverse the membrane as a helical segment. The Lumenal segment spans residues 1311 to 1317 (SSQQKAD). A helical membrane pass occupies residues 1318–1338 (WIPLALTIKGLNPTAIFLTTL). The Cytoplasmic portion of the chain corresponds to 1339–1346 (SRTSKKRS). A helical membrane pass occupies residues 1347–1367 (WPLNEAIMAVGMVSILASSLL). Over 1368 to 1370 (KND) the chain is Lumenal. Residues 1371–1391 (TPMTGPLVAGGLLTVCYVLTG) traverse the membrane as a helical segment. Residues 1392–1447 (RSADLELERATDVKWDDQAEISGSSPILSITISEDGSMSIKNEEEEQTLTILIRTG) lie on the Cytoplasmic side of the membrane. The tract at residues 1398 to 1437 (LERATDVKWDDQAEISGSSPILSITISEDGSMSIKNEEEE) is interacts with and activates NS3 protease. An intramembrane region (helical) is located at residues 1448–1468 (LLVISGLFPVSIPITAAAWYL). The Cytoplasmic segment spans residues 1469–2144 (WEVKKQRAGV…LSELPETLET (676 aa)). The Peptidase S7 domain maps to 1476 to 1653 (AGVLWDVPSP…EKSIEDNPEI (178 aa)). Active-site charge relay system; for serine protease NS3 activity residues include histidine 1526, aspartate 1550, and serine 1610. In terms of domain architecture, Helicase ATP-binding spans 1655-1811 (DDIFRKRRLT…QSNAPIMDEE (157 aa)). The tract at residues 1659–1662 (RKRR) is important for RNA-binding. 1668–1675 (LHPGAGKT) serves as a coordination point for ATP. Residues 1759–1762 (DEAH) carry the DEAH box motif. The Helicase C-terminal domain maps to 1821–1988 (SGHEWVTDFK…IIPSMFEPER (168 aa)). Lysine 1863 is modified (N6-acetyllysine; by host). A helical transmembrane segment spans residues 2145-2165 (LLLLTLLATVTGGIFLFLMSG). Topologically, residues 2166 to 2167 (RG) are lumenal. Positions 2168–2188 (IGKMTLGMCCIITASILLWYA) form an intramembrane region, helical. Glutamine 2189 is a topological domain (lumenal). A helical membrane pass occupies residues 2190–2210 (IQPHWIAASIILEFFLIVLLI). Residues 2211 to 2225 (PEPEKQRTPQDNQLT) lie on the Cytoplasmic side of the membrane. Residues 2226-2246 (YVIIAILTVVAATMANEMGFL) form a helical membrane-spanning segment. Over 2247-2271 (EKTKKDLGLGNIATQQPESNILDID) the chain is Lumenal. An intramembrane region (helical) is located at residues 2272–2292 (LRPASAWTLYAVATTFITPML). At 2293–2313 (RHSIENSSVNVSLTAIANQAT) the chain is on the lumenal side. 2 N-linked (GlcNAc...) asparagine; by host glycosylation sites follow: asparagine 2298 and asparagine 2302. The helical intramembrane region spans 2314-2334 (VLMGLGKGWPLSKMDIGVPLL). The Lumenal portion of the chain corresponds to 2335-2344 (AIGCYSQVNP). A helical membrane pass occupies residues 2345-2365 (ITLTAALLLLVAHYAIIGPGL). Residues 2366–2410 (QAKATREAQKRAAAGIMKNPTVDGITVIDLDPIPYDPKFEKQLGQ) are Cytoplasmic-facing. Residues 2411 to 2431 (VMLLVLCVTQVLMMRTTWALC) traverse the membrane as a helical segment. At 2432–2456 (EALTLATGPVSTLWEGNPGRFWNTT) the chain is on the lumenal side. The N-linked (GlcNAc...) asparagine; by host glycan is linked to asparagine 2454. A helical membrane pass occupies residues 2457-2477 (IAVSMANIFRGSYLAGAGLLF). Over 2478 to 3388 (SIMKNTTSTR…REEEEAGVLW (911 aa)) the chain is Cytoplasmic. One can recognise an mRNA cap 0-1 NS5-type MT domain in the interval 2490–2752 (TGNIGETLGE…DVDLGSGTRN (263 aa)). Serine 2544 contributes to the S-adenosyl-L-methionine binding site. At serine 2544 the chain carries Phosphoserine. Lysine 2549 acts as the For 2'-O-MTase activity in catalysis. An SUMO-interacting motif motif is present at residues 2565 to 2568 (VVDL). The S-adenosyl-L-methionine site is built by glycine 2574, tryptophan 2575, threonine 2592, lysine 2593, aspartate 2619, and valine 2620. Aspartate 2634 serves as the catalytic For 2'-O-MTase activity. Residue isoleucine 2635 participates in S-adenosyl-L-methionine binding. Active-site for 2'-O-MTase activity residues include lysine 2669 and glutamate 2705. Position 2707 (tyrosine 2707) interacts with S-adenosyl-L-methionine. The Zn(2+) site is built by glutamate 2926, histidine 2930, cysteine 2935, and cysteine 2938. The RdRp catalytic domain occupies 3017–3166 (AMYADDTAGW…PLDDRFARAL (150 aa)). Zn(2+) is bound by residues histidine 3200, cysteine 3216, and cysteine 3335.

This sequence in the N-terminal section; belongs to the class I-like SAM-binding methyltransferase superfamily. mRNA cap 0-1 NS5-type methyltransferase family. As to quaternary structure, homodimer. Interacts (via N-terminus) with host EXOC1 (via C-terminus); this interaction results in EXOC1 degradation through the proteasome degradation pathway. In terms of assembly, forms heterodimers with envelope protein E in the endoplasmic reticulum and Golgi. Homodimer; in the endoplasmic reticulum and Golgi. Interacts with protein prM. Interacts with non-structural protein 1. As to quaternary structure, homodimer; Homohexamer when secreted. Interacts with envelope protein E. Interacts with host PRKAA1. In terms of assembly, interacts (via N-terminus) with serine protease NS3. Forms a heterodimer with serine protease NS3. May form homooligomers. As to quaternary structure, forms a heterodimer with NS2B. Interacts with NS4B. Interacts with unphosphorylated RNA-directed RNA polymerase NS5; this interaction stimulates RNA-directed RNA polymerase NS5 guanylyltransferase activity. Interacts with host SHFL. In terms of assembly, interacts with host MAVS; this interaction inhibits the synthesis of IFN-beta. Interacts with host SHFL. Interacts with host AUP1; the interaction occurs in the presence of Dengue virus NS4B and induces lipophagy which facilitates production of virus progeny particles. May interact with host SRPRA and SEC61G. Interacts with serine protease NS3. As to quaternary structure, homodimer. Interacts with host STAT2; this interaction inhibits the phosphorylation of the latter, and, when all viral proteins are present (polyprotein), targets STAT2 for degradation. Interacts with serine protease NS3. Interacts with host PAF1 complex; the interaction may prevent the recruitment of the PAF1 complex to interferon-responsive genes, and thus reduces the immune response. In terms of processing, specific enzymatic cleavages in vivo yield mature proteins. Cleavages in the lumen of endoplasmic reticulum are performed by host signal peptidase, whereas cleavages in the cytoplasmic side are performed by serine protease NS3. Signal cleavage at the 2K-4B site requires a prior NS3 protease-mediated cleavage at the 4A-2K site. Cleaved in post-Golgi vesicles by a host furin, releasing the mature small envelope protein M, and peptide pr. This cleavage is incomplete as up to 30% of viral particles still carry uncleaved prM. Post-translationally, N-glycosylated. In terms of processing, N-glycosylated. The excreted form is glycosylated and this is required for efficient secretion of the protein from infected cells. Acetylated by host KAT5. Acetylation modulates NS3 RNA-binding and unwinding activities and plays an important positive role for viral replication. Post-translationally, sumoylation of RNA-directed RNA polymerase NS5 increases NS5 protein stability allowing proper viral RNA replication. In terms of processing, phosphorylated on serines residues. This phosphorylation may trigger NS5 nuclear localization.

The protein resides in the virion. Its subcellular location is the host nucleus. The protein localises to the host cytoplasm. It localises to the host perinuclear region. It is found in the secreted. The protein resides in the virion membrane. Its subcellular location is the host endoplasmic reticulum membrane. The protein localises to the host mitochondrion. The catalysed reaction is Selective hydrolysis of -Xaa-Xaa-|-Yaa- bonds in which each of the Xaa can be either Arg or Lys and Yaa can be either Ser or Ala.. It carries out the reaction RNA(n) + a ribonucleoside 5'-triphosphate = RNA(n+1) + diphosphate. It catalyses the reaction a ribonucleoside 5'-triphosphate + H2O = a ribonucleoside 5'-diphosphate + phosphate + H(+). The enzyme catalyses ATP + H2O = ADP + phosphate + H(+). The catalysed reaction is a 5'-end (5'-triphosphoguanosine)-ribonucleoside in mRNA + S-adenosyl-L-methionine = a 5'-end (N(7)-methyl 5'-triphosphoguanosine)-ribonucleoside in mRNA + S-adenosyl-L-homocysteine. It carries out the reaction a 5'-end (N(7)-methyl 5'-triphosphoguanosine)-ribonucleoside in mRNA + S-adenosyl-L-methionine = a 5'-end (N(7)-methyl 5'-triphosphoguanosine)-(2'-O-methyl-ribonucleoside) in mRNA + S-adenosyl-L-homocysteine + H(+). Functionally, plays a role in virus budding by binding to the cell membrane and gathering the viral RNA into a nucleocapsid that forms the core of a mature virus particle. During virus entry, may induce genome penetration into the host cytoplasm after hemifusion induced by the surface proteins. Can migrate to the cell nucleus where it modulates host functions. Overcomes the anti-viral effects of host EXOC1 by sequestering and degrading the latter through the proteasome degradation pathway. In terms of biological role, inhibits RNA silencing by interfering with host Dicer. Prevents premature fusion activity of envelope proteins in trans-Golgi by binding to envelope protein E at pH6.0. After virion release in extracellular space, gets dissociated from E dimers. Its function is as follows. Acts as a chaperone for envelope protein E during intracellular virion assembly by masking and inactivating envelope protein E fusion peptide. prM is the only viral peptide matured by host furin in the trans-Golgi network probably to avoid catastrophic activation of the viral fusion activity in acidic Golgi compartment prior to virion release. prM-E cleavage is inefficient, and many virions are only partially matured. These uncleaved prM would play a role in immune evasion. Functionally, may play a role in virus budding. Exerts cytotoxic effects by activating a mitochondrial apoptotic pathway through M ectodomain. May display a viroporin activity. In terms of biological role, binds to host cell surface receptor and mediates fusion between viral and cellular membranes. Envelope protein is synthesized in the endoplasmic reticulum in the form of heterodimer with protein prM. They play a role in virion budding in the ER, and the newly formed immature particle is covered with 60 spikes composed of heterodimer between precursor prM and envelope protein E. The virion is transported to the Golgi apparatus where the low pH causes dissociation of PrM-E heterodimers and formation of E homodimers. prM-E cleavage is inefficient, and many virions are only partially matured. These uncleaved prM would play a role in immune evasion. Involved in immune evasion, pathogenesis and viral replication. Once cleaved off the polyprotein, is targeted to three destinations: the viral replication cycle, the plasma membrane and the extracellular compartment. Essential for viral replication. Required for formation of the replication complex and recruitment of other non-structural proteins to the ER-derived membrane structures. Excreted as a hexameric lipoparticle that plays a role against host immune response. Antagonizing the complement function. Binds to the host macrophages and dendritic cells. Inhibits signal transduction originating from Toll-like receptor 3 (TLR3). Mediates complement activation, which may contribute to the pathogenesis of the vascular leakage that occurs in severe dengue disease. Activates autophagy through the AMPK/ERK/mTOR signaling pathway. Mechanistically, acts as the assembly platform for STK11-AMPK interactions and promotes STK11-AMPK interactions. In turn, promotes phosphorylation of the AMPK kinase structural domain and activates AMPK, thereby positively regulating the AMPK/ERK/mTOR signaling pathway and inducing autophagy. Its function is as follows. Disrupts the host endothelial glycocalyx layer of host pulmonary microvascular endothelial cells, inducing degradation of sialic acid and shedding of heparan sulfate proteoglycans. NS1 induces expression of sialidases, heparanase, and activates cathepsin L, which activates heparanase via enzymatic cleavage. These effects are probably linked to the endothelial hyperpermeability observed in severe dengue disease. Functionally, component of the viral RNA replication complex that functions in virion assembly and antagonizes the host immune response. In terms of biological role, required cofactor for the serine protease function of NS3. May have membrane-destabilizing activity and form viroporins. Displays three enzymatic activities: serine protease, NTPase and RNA helicase. NS3 serine protease, in association with NS2B, performs its autocleavage and cleaves the polyprotein at dibasic sites in the cytoplasm: C-prM, NS2A-NS2B, NS2B-NS3, NS3-NS4A, NS4A-2K and NS4B-NS5. NS3 RNA helicase binds RNA and unwinds dsRNA in the 3' to 5' direction. Its function is as follows. Regulates the ATPase activity of the NS3 helicase activity. NS4A allows NS3 helicase to conserve energy during unwinding. Plays a role in the inhibition of the host innate immune response. Interacts with host MAVS and thereby prevents the interaction between RIGI and MAVS. In turn, IFN-beta production is impaired. Interacts with host AUP1 which mediates induction of lipophagy in host cells and facilitates production of virus progeny particles. Functionally, functions as a signal peptide for NS4B and is required for the interferon antagonism activity of the latter. In terms of biological role, induces the formation of ER-derived membrane vesicles where the viral replication takes place. Inhibits interferon (IFN)-induced host STAT1 phosphorylation and nuclear translocation, thereby preventing the establishment of cellular antiviral state by blocking the IFN-alpha/beta pathway. Replicates the viral (+) and (-) RNA genome, and performs the capping of genomes in the cytoplasm. NS5 methylates viral RNA cap at guanine N-7 and ribose 2'-O positions. Besides its role in RNA genome replication, also prevents the establishment of cellular antiviral state by blocking the interferon-alpha/beta (IFN-alpha/beta) signaling pathway. Inhibits host TYK2 and STAT2 phosphorylation, thereby preventing activation of JAK-STAT signaling pathway. May reduce immune responses by preventing the recruitment of the host PAF1 complex to interferon-responsive genes. The chain is Genome polyprotein from Aedimorphus (Red guenon).